The following is a 302-amino-acid chain: GTP cyclohydrolase FolE2 (302 aa).

The disordered stretch occupies residues 1–27; it reads MPKKQLPPKEERHKLFGSVPPKERTKP.

Belongs to the GTP cyclohydrolase IV family.

It catalyses the reaction GTP + H2O = 7,8-dihydroneopterin 3'-triphosphate + formate + H(+). It functions in the pathway cofactor biosynthesis; 7,8-dihydroneopterin triphosphate biosynthesis; 7,8-dihydroneopterin triphosphate from GTP: step 1/1. Functionally, converts GTP to 7,8-dihydroneopterin triphosphate. In Oceanobacillus iheyensis (strain DSM 14371 / CIP 107618 / JCM 11309 / KCTC 3954 / HTE831), this protein is GTP cyclohydrolase FolE2.